The primary structure comprises 272 residues: Soluble interferon gamma receptor OPG193 (272 aa).

An N-terminal signal peptide occupies residues 1–13 (MRYIIILAVLFIN). 3 N-linked (GlcNAc...) asparagine; by host glycosylation sites follow: Asn42, Asn150, and Asn267.

This sequence belongs to the type II cytokine receptor family. As to quaternary structure, homodimer. Interacts with host IFNG.

It localises to the secreted. Counteracts the antiviral effects of host IFN-gamma. Acts as a soluble IFN-gamma receptor and thus inhibits the interaction between host IFN-gamma and its receptor. The protein is Soluble interferon gamma receptor OPG193 (OPG193) of Bos taurus (Bovine).